Consider the following 745-residue polypeptide: Probable copper-transporting ATPase PacS (745 aa).

Residues 1 to 94 (MAQTINLQLE…PVFSAKLVTG (94 aa)) are Cytoplasmic-facing. The region spanning 3-68 (QTINLQLEGM…AVERAGYHAR (66 aa)) is the HMA domain. Residues cysteine 14 and cysteine 17 each contribute to the a metal cation site. The chain crosses the membrane as a helical span at residues 95–115 (LVISAVLFFGSLPMMLGVNIP). Residues 116 to 125 (HFPHIFHDPW) lie on the Extracellular side of the membrane. Residues 126–145 (LQWLLATPVQFWSGAEFYRG) form a helical membrane-spanning segment. Residues 146–152 (AWKSVRT) lie on the Cytoplasmic side of the membrane. The chain crosses the membrane as a helical span at residues 153–173 (RSATMDTLVALGTSAAYFYSV). The Extracellular portion of the chain corresponds to 174 to 193 (AITLFPQWLTSQGLAAHVYF). A helical transmembrane segment spans residues 194-214 (EAAAVVITLILLGRSLEQRAR). Topologically, residues 215–342 (RETSAAIRKL…KAPIQHFVDR (128 aa)) are cytoplasmic. The chain crosses the membrane as a helical span at residues 343–365 (ITHWFVPTVIVVAIAAFCIWWLT). Residues 366-372 (TGNITLA) are Extracellular-facing. Residues 373 to 390 (VLTLVEVLIIACPCALGL) form a helical membrane-spanning segment. The Cytoplasmic segment spans residues 391 to 543 (ATPTSVMVGT…QAQQWEKEQK (153 aa)). Catalysis depends on aspartate 428, which acts as the 4-aspartylphosphate intermediate. A helical transmembrane segment spans residues 544-564 (TVIWLAVDTEVKALLAIADAI). Topologically, residues 565-687 (KPSSPQVVQA…KLSRATMGNI (123 aa)) are extracellular. Mg(2+)-binding residues include aspartate 633 and aspartate 637. The chain crosses the membrane as a helical span at residues 688–707 (RQNLFFAFIYNVIGIPVAAG). At 708 to 719 (LFYPLFGLLLNP) the chain is on the cytoplasmic side. Residues 720-738 (ILAGAAMAFSSVSVVTNAL) form a helical membrane-spanning segment. Over 739–745 (RLKKFCP) the chain is Extracellular.

The protein belongs to the cation transport ATPase (P-type) (TC 3.A.3) family. Type IB subfamily.

The protein localises to the cell membrane. It carries out the reaction Cu(+)(in) + ATP + H2O = Cu(+)(out) + ADP + phosphate + H(+). Functionally, may play a role in the osmotic adaptation. The chain is Probable copper-transporting ATPase PacS (pacS) from Synechocystis sp. (strain ATCC 27184 / PCC 6803 / Kazusa).